Consider the following 290-residue polypeptide: Glutamate 5-kinase (290 aa).

ATP is bound at residue lysine 21. Substrate-binding residues include serine 60, aspartate 151, and asparagine 163. Position 217 to 223 (217 to 223 (TGGMFTK)) interacts with ATP.

It belongs to the glutamate 5-kinase family.

It localises to the cytoplasm. It catalyses the reaction L-glutamate + ATP = L-glutamyl 5-phosphate + ADP. It functions in the pathway amino-acid biosynthesis; L-proline biosynthesis; L-glutamate 5-semialdehyde from L-glutamate: step 1/2. Functionally, catalyzes the transfer of a phosphate group to glutamate to form L-glutamate 5-phosphate. The polypeptide is Glutamate 5-kinase (Leptospira interrogans serogroup Icterohaemorrhagiae serovar copenhageni (strain Fiocruz L1-130)).